Here is a 1199-residue protein sequence, read N- to C-terminus: DNA-directed RNA polymerase subunit beta' (1199 aa).

Zn(2+) contacts are provided by cysteine 60, cysteine 62, cysteine 75, and cysteine 78. Mg(2+)-binding residues include aspartate 449, aspartate 451, and aspartate 453. Positions 818, 892, 899, and 902 each coordinate Zn(2+).

It belongs to the RNA polymerase beta' chain family. In terms of assembly, the RNAP catalytic core consists of 2 alpha, 1 beta, 1 beta' and 1 omega subunit. When a sigma factor is associated with the core the holoenzyme is formed, which can initiate transcription. Requires Mg(2+) as cofactor. It depends on Zn(2+) as a cofactor.

It catalyses the reaction RNA(n) + a ribonucleoside 5'-triphosphate = RNA(n+1) + diphosphate. Its function is as follows. DNA-dependent RNA polymerase catalyzes the transcription of DNA into RNA using the four ribonucleoside triphosphates as substrates. The polypeptide is DNA-directed RNA polymerase subunit beta' (Bacillus velezensis (strain DSM 23117 / BGSC 10A6 / LMG 26770 / FZB42) (Bacillus amyloliquefaciens subsp. plantarum)).